A 1355-amino-acid chain; its full sequence is Phospholipid-transporting ATPase DRS2 (1355 aa).

The segment covering 1-15 (MNDDRETPPKRKPGE) has biased composition (basic and acidic residues). Residues 1–50 (MNDDRETPPKRKPGEDDTLFDIDFLDDTTSHSGSRSKVTNSHANANYIPP) are disordered. Positions 1–104 (MNDDRETPPK…SDAYQPQSLR (104 aa)) are involved in autoinhibition. The Cytoplasmic segment spans residues 1–221 (MNDDRETPPK…TFLPKFLFQE (221 aa)). Residues 16–26 (DDTLFDIDFLD) are compositionally biased toward acidic residues. The span at 30-44 (SHSGSRSKVTNSHAN) shows a compositional bias: polar residues. S102 is modified (phosphoserine). A helical membrane pass occupies residues 222–242 (FSKYANLFFLCTSAIQQVPHV). The segment at 237 to 238 (QQ) is involved in phosphatidylserine substrate recognition. The Lumenal portion of the chain corresponds to 243 to 246 (SPTN). Residues 247–267 (RYTTIGTLLVVLIVSAMKECI) form a helical membrane-spanning segment. At 268–449 (EDIKRANSDK…VEKIINRQII (182 aa)) the chain is on the cytoplasmic side. A helical membrane pass occupies residues 450 to 470 (ALFTVLIVLILISSIGNVIMS). At 471–490 (TADAKHLSYLYLEGTNKAGL) the chain is on the lumenal side. Residues 491-511 (FFKDFLTFWILFSNLVPISLF) form a helical membrane-spanning segment. Topologically, residues 512 to 1012 (VTVELIKYYQ…WSYQRISVAI (501 aa)) are cytoplasmic. D560 (4-aspartylphosphate intermediate) is an active-site residue. Residues D560, K561, T562, E655, F698, S700, K703, K721, R755, T756, T835, G836, D837, R928, and K934 each coordinate ATP. D560 is a Mg(2+) binding site. T562 provides a ligand contact to Mg(2+). Residue D954 participates in Mg(2+) binding. 2 residues coordinate ATP: N957 and D958. Mg(2+) is bound at residue D958. The chain crosses the membrane as a helical span at residues 1013 to 1033 (LYSFYKNTALYMTQFWYVFAN). The Lumenal segment spans residues 1034–1043 (AFSGQSIMES). A helical transmembrane segment spans residues 1044–1064 (WTMSFYNLFFTVWPPFVIGVF). Residues 1065-1094 (DQFVSSRLLERYPQLYKLGQKGQFFSVYIF) are Cytoplasmic-facing. Residues 1095 to 1115 (WGWIINGFFHSAIVFIGTILI) form a helical membrane-spanning segment. At 1116–1131 (YRYGFALNMHGELADH) the chain is on the lumenal side. Residues 1132-1152 (WSWGVTVYTTSVIIVLGKAAL) form a helical membrane-spanning segment. K1149 is a binding site for a 1,2-diacyl-sn-glycero-3-phospho-(1D-myo-inositol 4-phosphate). At 1153–1161 (VTNQWTKFT) the chain is on the cytoplasmic side. Residues 1162-1182 (LIAIPGSLLFWLIFFPIYASI) form a helical membrane-spanning segment. Over 1183–1202 (FPHANISREYYGVVKHTYGS) the chain is Lumenal. The helical transmembrane segment at 1203–1223 (GVFWLTLIVLPIFALVRDFLW) threads the bilayer. Positions 1219, 1223, 1224, 1235, and 1236 each coordinate a 1,2-diacyl-sn-glycero-3-phospho-(1D-myo-inositol 4-phosphate). At 1224 to 1355 (KYYKRMYEPE…SSRDDISFDI (132 aa)) the chain is on the cytoplasmic side. The tract at residues 1230 to 1282 (YEPETYHVIQEMQKYNISDSRPHVQQFQNAIRKVRQVQRMKKQRGFAFSQAEE) is interaction with GEA2. Positions 1231–1309 (EPETYHVIQE…KYGELQDASA (79 aa)) are involved in autoinhibition. Residues 1305–1355 (QDASANPFNDNNGLGSNDFESAEPFIENPFADGNQNSNRFSSSRDDISFDI) are disordered. Over residues 1307–1323 (ASANPFNDNNGLGSNDF) the composition is skewed to polar residues. Positions 1346-1355 (SSRDDISFDI) are enriched in basic and acidic residues.

It belongs to the cation transport ATPase (P-type) (TC 3.A.3) family. Type IV subfamily. In terms of assembly, component of a flippase complex consisting of DRS2 and CDC50. Interacts with CDC50; the interaction is direct, is required for their mutual export from the endoplasmic reticulum, and preferentially occurs when DRS2 is in the E2P state. Interacts (via C-terminus) with GEA2 (via SEC7 domain); the interaction is direct. Interacts with GEA1. Mg(2+) serves as cofactor.

It is found in the golgi apparatus. It localises to the trans-Golgi network membrane. Its subcellular location is the endosome membrane. It catalyses the reaction ATP + H2O + phospholipidSide 1 = ADP + phosphate + phospholipidSide 2.. The enzyme catalyses a 1,2-diacyl-sn-glycero-3-phospho-L-serine(out) + ATP + H2O = a 1,2-diacyl-sn-glycero-3-phospho-L-serine(in) + ADP + phosphate + H(+). It carries out the reaction a 1,2-diacyl-sn-glycero-3-phosphoethanolamine(out) + ATP + H2O = a 1,2-diacyl-sn-glycero-3-phosphoethanolamine(in) + ADP + phosphate + H(+). With respect to regulation, allosterically activated by binding 1,2-diacyl-sn-glycero-3-phospho-(1D-myo-inositol 4-phosphate) (phosphatidylinositol 4-phosphate). Inhibited by orthovanadate, N-ethylmaleimide, trifluoroberyllate and tetrafluoroaluminate; orthovanadate and N-ethylmaleimide inhibit phosphorylation of the active site aspartic acid. The ATPase activity is not potently stimulated by phosphatidylinositol 3-phosphate and phosphatidylinositol 5-phosphate, phosphatidylinositol 4,5-bisphosphate or phosphatidylcholine. Not inhibited by azide. Its function is as follows. Catalytic component of a P4-ATPase flippase complex which catalyzes the hydrolysis of ATP coupled to the transport of phosphatidylserine and small amounts of ethanolamine from the lumen to the cytosolic leaflet of the trans-Golgi network and ensures the maintenance of asymmetric distribution of phospholipids. Contributes to clathrin-coated vesicle formation, endocytosis, and protein trafficking between the Golgi and endosomal system. Does not appear to transport phosphatidylcholine or sphingomyelin. The sequence is that of Phospholipid-transporting ATPase DRS2 from Saccharomyces cerevisiae (strain ATCC 204508 / S288c) (Baker's yeast).